The chain runs to 238 residues: Probable transcriptional regulatory protein YeeN (238 aa).

Belongs to the TACO1 family. YeeN subfamily.

The protein localises to the cytoplasm. This Salmonella choleraesuis (strain SC-B67) protein is Probable transcriptional regulatory protein YeeN.